The following is a 382-amino-acid chain: UDP-N-acetylglucosamine--N-acetylmuramyl-(pentapeptide) pyrophosphoryl-undecaprenol N-acetylglucosamine transferase (382 aa).

UDP-N-acetyl-alpha-D-glucosamine-binding positions include 11–13, Asn124, Arg165, Ser200, Ile254, and Gln299; that span reads TGG.

It belongs to the glycosyltransferase 28 family. MurG subfamily.

Its subcellular location is the cell inner membrane. It carries out the reaction di-trans,octa-cis-undecaprenyl diphospho-N-acetyl-alpha-D-muramoyl-L-alanyl-D-glutamyl-meso-2,6-diaminopimeloyl-D-alanyl-D-alanine + UDP-N-acetyl-alpha-D-glucosamine = di-trans,octa-cis-undecaprenyl diphospho-[N-acetyl-alpha-D-glucosaminyl-(1-&gt;4)]-N-acetyl-alpha-D-muramoyl-L-alanyl-D-glutamyl-meso-2,6-diaminopimeloyl-D-alanyl-D-alanine + UDP + H(+). It functions in the pathway cell wall biogenesis; peptidoglycan biosynthesis. Functionally, cell wall formation. Catalyzes the transfer of a GlcNAc subunit on undecaprenyl-pyrophosphoryl-MurNAc-pentapeptide (lipid intermediate I) to form undecaprenyl-pyrophosphoryl-MurNAc-(pentapeptide)GlcNAc (lipid intermediate II). This Nitratidesulfovibrio vulgaris (strain DSM 19637 / Miyazaki F) (Desulfovibrio vulgaris) protein is UDP-N-acetylglucosamine--N-acetylmuramyl-(pentapeptide) pyrophosphoryl-undecaprenol N-acetylglucosamine transferase.